The following is a 452-amino-acid chain: Pup--protein ligase 1 (452 aa).

Glu-9 is a Mg(2+) binding site. ATP is bound at residue Arg-53. Residue Tyr-55 participates in Mg(2+) binding. The active-site Proton acceptor is the Asp-57. Glu-63 lines the Mg(2+) pocket. ATP contacts are provided by Thr-66 and Trp-419.

The protein belongs to the Pup ligase/Pup deamidase family. Pup-conjugating enzyme subfamily.

The catalysed reaction is ATP + [prokaryotic ubiquitin-like protein]-L-glutamate + [protein]-L-lysine = ADP + phosphate + N(6)-([prokaryotic ubiquitin-like protein]-gamma-L-glutamyl)-[protein]-L-lysine.. It participates in protein degradation; proteasomal Pup-dependent pathway. The protein operates within protein modification; protein pupylation. Its function is as follows. Catalyzes the covalent attachment of the prokaryotic ubiquitin-like protein modifier Pup to the proteasomal substrate proteins, thereby targeting them for proteasomal degradation. This tagging system is termed pupylation. The ligation reaction involves the side-chain carboxylate of the C-terminal glutamate of Pup and the side-chain amino group of a substrate lysine. This chain is Pup--protein ligase 1, found in Rhodococcus erythropolis (Arthrobacter picolinophilus).